The following is a 389-amino-acid chain: 3-ketoacyl-CoA thiolase (389 aa).

The active-site Acyl-thioester intermediate is the cysteine 91. Catalysis depends on proton acceptor residues histidine 343 and cysteine 373.

Belongs to the thiolase-like superfamily. Thiolase family. In terms of assembly, heterotetramer of two alpha chains (FadB) and two beta chains (FadA).

It localises to the cytoplasm. It catalyses the reaction an acyl-CoA + acetyl-CoA = a 3-oxoacyl-CoA + CoA. It participates in lipid metabolism; fatty acid beta-oxidation. In terms of biological role, catalyzes the final step of fatty acid oxidation in which acetyl-CoA is released and the CoA ester of a fatty acid two carbons shorter is formed. The sequence is that of 3-ketoacyl-CoA thiolase from Pseudoalteromonas translucida (strain TAC 125).